The primary structure comprises 317 residues: Inactive serine protease 45 (317 aa).

The first 35 residues, 1-35 (MATSLRGLDAGPGSLRRWILICFAALLLLPPRPNL), serve as a signal peptide directing secretion. The N-linked (GlcNAc...) asparagine glycan is linked to asparagine 40. Residues 44-291 (PVCGTPWWPD…YTIWIKDQVS (248 aa)) enclose the Peptidase S1 domain. A disulfide bridge links cysteine 75 with cysteine 91. N-linked (GlcNAc...) asparagine glycosylation is present at asparagine 110. Disulfide bonds link cysteine 172–cysteine 249, cysteine 207–cysteine 230, and cysteine 239–cysteine 267. N-linked (GlcNAc...) asparagine glycosylation is present at asparagine 272.

The protein belongs to the peptidase S1 family.

It localises to the secreted. The protein is Inactive serine protease 45 of Mus musculus (Mouse).